Consider the following 89-residue polypeptide: UPF0223 protein BCB4264_A4064 (89 aa).

It belongs to the UPF0223 family.

The sequence is that of UPF0223 protein BCB4264_A4064 from Bacillus cereus (strain B4264).